Reading from the N-terminus, the 77-residue chain is Adipokinetic prohormone type 3 (77 aa).

The N-terminal stretch at 1–22 (MQVRAVLVLAVVALVAVATSRA) is a signal peptide. Gln23 is subject to Pyrrolidone carboxylic acid. Trp30 carries the post-translational modification Tryptophan amide.

The protein belongs to the AKH/HRTH/RPCH family.

It is found in the secreted. Functionally, this hormone, released from cells in the corpora cardiaca, causes release of diglycerides from the fat body and stimulation of muscles to use these diglycerides as an energy source during energy-demanding processes. The polypeptide is Adipokinetic prohormone type 3 (Locusta migratoria (Migratory locust)).